Consider the following 379-residue polypeptide: Epoxyqueuosine reductase (379 aa).

D139 acts as the Proton donor in catalysis. The 4Fe-4S ferredoxin-type domain maps to 181 to 213 (IPLPVDQPVEEGCGKCVACMTICPTGAIVEPYT). [4Fe-4S] cluster-binding residues include C193, C196, C199, C203, C219, C246, C249, and C253.

The protein belongs to the QueG family. Monomer. Cob(II)alamin is required as a cofactor. Requires [4Fe-4S] cluster as cofactor.

Its subcellular location is the cytoplasm. It carries out the reaction epoxyqueuosine(34) in tRNA + AH2 = queuosine(34) in tRNA + A + H2O. The protein operates within tRNA modification; tRNA-queuosine biosynthesis. In terms of biological role, catalyzes the conversion of epoxyqueuosine (oQ) to queuosine (Q), which is a hypermodified base found in the wobble positions of tRNA(Asp), tRNA(Asn), tRNA(His) and tRNA(Tyr). This is Epoxyqueuosine reductase from Shigella dysenteriae serotype 1 (strain Sd197).